Consider the following 149-residue polypeptide: D-aminoacyl-tRNA deacylase (149 aa).

A Gly-cisPro motif, important for rejection of L-amino acids motif is present at residues 137–138; the sequence is GP.

This sequence belongs to the DTD family. Homodimer.

It localises to the cytoplasm. The enzyme catalyses glycyl-tRNA(Ala) + H2O = tRNA(Ala) + glycine + H(+). The catalysed reaction is a D-aminoacyl-tRNA + H2O = a tRNA + a D-alpha-amino acid + H(+). In terms of biological role, an aminoacyl-tRNA editing enzyme that deacylates mischarged D-aminoacyl-tRNAs. Also deacylates mischarged glycyl-tRNA(Ala), protecting cells against glycine mischarging by AlaRS. Acts via tRNA-based rather than protein-based catalysis; rejects L-amino acids rather than detecting D-amino acids in the active site. By recycling D-aminoacyl-tRNA to D-amino acids and free tRNA molecules, this enzyme counteracts the toxicity associated with the formation of D-aminoacyl-tRNA entities in vivo and helps enforce protein L-homochirality. The polypeptide is D-aminoacyl-tRNA deacylase (Clostridium botulinum (strain Alaska E43 / Type E3)).